The chain runs to 77 residues: Conotoxin PnMEKL-04 (77 aa).

Positions 1–19 are cleaved as a signal peptide; it reads MEKLTILLLVAAVLMSTQA. Positions 20–45 are excised as a propeptide; the sequence is LPQGGGENRLKENIKFLLKRKTAADR. 3 disulfide bridges follow: Cys-51/Cys-65, Cys-58/Cys-69, and Cys-64/Cys-73.

The protein belongs to the conotoxin O2 superfamily. Expressed by the venom duct.

The protein localises to the secreted. The protein is Conotoxin PnMEKL-04 of Conus pennaceus (Feathered cone).